A 542-amino-acid chain; its full sequence is Putative DEAD-box ATP-dependent RNA helicase 43 (542 aa).

The Q motif signature appears at 97–125 (KNFMDMKFPSPLLRMLKDKGIMHPTPIQV). In terms of domain architecture, Helicase ATP-binding spans 128–312 (LPVVLSGRDM…TSALVKPVTV (185 aa)). 141–148 (AFTGSGKT) is an ATP binding site. The short motif at 260–263 (DEAD) is the DEAD box element. The Helicase C-terminal domain maps to 323-483 (DVIQEVEYVK…RIPPVLAELN (161 aa)). A CCHC-type zinc finger spans residues 499-516 (KGCAYCGGLGHRILQCPK).

Belongs to the DEAD box helicase family. DDX41 subfamily.

The enzyme catalyses ATP + H2O = ADP + phosphate + H(+). In Arabidopsis thaliana (Mouse-ear cress), this protein is Putative DEAD-box ATP-dependent RNA helicase 43 (RH43).